Reading from the N-terminus, the 397-residue chain is MSTADATGGLTEEEENILWERSVIAWKQQKEERKKSNQELIDRGEKPIDYDNDWKDLPIFMQELPEEPSSNQYLAAFQSLSNDCTPEERAETFKNLGNDYFREGKSRFNDALYYYNKALSVKCNDMTKNSIYLSNRAAINMELGNYGLVIKDCTVSVEFNPLNMKAYSRMARAQLQLSKYQDSIKTCDLGLSHEPTNKDLSTIRENANKKLQDIKKREQDKIDKENQLKQQQQLLATKLYEKNKYKLGHQIFDMSQYTYQSDRKVTIDQNNDVHFPVVFLYPEFGKSDFIMDFQEDHTFGDHLQMMFPPENPEFAPWDTKKEYTMDRIEVYFETNWTKPILSDIKIKEIEKKWIRVKHTTDIAKVISHPTYIIPEIPIFYIVSRGNLFYKKFLENKL.

TPR repeat units follow at residues 90–125, 130–163, and 164–197; these read AETF…KCND, SIYL…NPLN, and MKAY…EPTN.

This sequence belongs to the TTC4 family.

The chain is Tetratricopeptide repeat protein 4 homolog (ttc4) from Dictyostelium discoideum (Social amoeba).